The sequence spans 183 residues: Photosystem I assembly protein Ycf3 (183 aa).

3 TPR repeats span residues Ala-35–Ser-68, Ser-72–Leu-105, and Gly-120–Asn-153.

It belongs to the Ycf3 family.

The protein localises to the plastid. It localises to the chloroplast thylakoid membrane. Functionally, essential for the assembly of the photosystem I (PSI) complex. May act as a chaperone-like factor to guide the assembly of the PSI subunits. This chain is Photosystem I assembly protein Ycf3, found in Adiantum capillus-veneris (Maidenhair fern).